The following is a 511-amino-acid chain: Bifunctional purine biosynthesis protein PurH (511 aa).

One can recognise an MGS-like domain in the interval 1-146 (MGRLALISVT…KNFAHLTVIS (146 aa)).

Belongs to the PurH family.

The catalysed reaction is (6R)-10-formyltetrahydrofolate + 5-amino-1-(5-phospho-beta-D-ribosyl)imidazole-4-carboxamide = 5-formamido-1-(5-phospho-D-ribosyl)imidazole-4-carboxamide + (6S)-5,6,7,8-tetrahydrofolate. It catalyses the reaction IMP + H2O = 5-formamido-1-(5-phospho-D-ribosyl)imidazole-4-carboxamide. It participates in purine metabolism; IMP biosynthesis via de novo pathway; 5-formamido-1-(5-phospho-D-ribosyl)imidazole-4-carboxamide from 5-amino-1-(5-phospho-D-ribosyl)imidazole-4-carboxamide (10-formyl THF route): step 1/1. Its pathway is purine metabolism; IMP biosynthesis via de novo pathway; IMP from 5-formamido-1-(5-phospho-D-ribosyl)imidazole-4-carboxamide: step 1/1. In Microcystis aeruginosa (strain NIES-843 / IAM M-2473), this protein is Bifunctional purine biosynthesis protein PurH.